A 179-amino-acid chain; its full sequence is Peptidyl-tRNA hydrolase (179 aa).

Tyr-15 serves as a coordination point for tRNA. His-20 acts as the Proton acceptor in catalysis. Positions 66, 68, and 114 each coordinate tRNA.

The protein belongs to the PTH family. As to quaternary structure, monomer.

It is found in the cytoplasm. It carries out the reaction an N-acyl-L-alpha-aminoacyl-tRNA + H2O = an N-acyl-L-amino acid + a tRNA + H(+). Functionally, hydrolyzes ribosome-free peptidyl-tRNAs (with 1 or more amino acids incorporated), which drop off the ribosome during protein synthesis, or as a result of ribosome stalling. Catalyzes the release of premature peptidyl moieties from peptidyl-tRNA molecules trapped in stalled 50S ribosomal subunits, and thus maintains levels of free tRNAs and 50S ribosomes. The sequence is that of Peptidyl-tRNA hydrolase from Chlamydia trachomatis serovar L2b (strain UCH-1/proctitis).